The primary structure comprises 882 residues: Alanine--tRNA ligase (882 aa).

Zn(2+) is bound by residues His-564, His-568, Cys-666, and His-670.

It belongs to the class-II aminoacyl-tRNA synthetase family. Zn(2+) is required as a cofactor.

It is found in the cytoplasm. It carries out the reaction tRNA(Ala) + L-alanine + ATP = L-alanyl-tRNA(Ala) + AMP + diphosphate. Catalyzes the attachment of alanine to tRNA(Ala) in a two-step reaction: alanine is first activated by ATP to form Ala-AMP and then transferred to the acceptor end of tRNA(Ala). Also edits incorrectly charged Ser-tRNA(Ala) and Gly-tRNA(Ala) via its editing domain. This is Alanine--tRNA ligase from Rubrobacter xylanophilus (strain DSM 9941 / JCM 11954 / NBRC 16129 / PRD-1).